We begin with the raw amino-acid sequence, 95 residues long: Opiscorpine-1 (95 aa).

An N-terminal signal peptide occupies residues 1-19 (MNNKLTALIFLGLLAIASC). The 41-residue stretch at 55–95 (EFMCVANVDMTKSCDTHCQKASGEKGYCHGTKCKCGVPLSY) folds into the BetaSPN-type CS-alpha/beta domain. 3 disulfides stabilise this stretch: Cys-58–Cys-82, Cys-68–Cys-87, and Cys-72–Cys-89.

The protein belongs to the long chain scorpion toxin family. Class 3 subfamily. Expressed by the venom gland.

It localises to the secreted. Functionally, the short synthetic peptide (20-54) has antimicrobial activity against the yeasts F.culmorum (IC(50)=8.8 uM) and F.oxysporum (IC(50)=10 uM), and the Gram-negative bacteria E.coli. The chain is Opiscorpine-1 from Opistophthalmus carinatus (African yellow leg scorpion).